Reading from the N-terminus, the 723-residue chain is Host cell factor 2 (723 aa).

4 Kelch repeats span residues 34–79 (LMII…GFVC), 83–130 (RILV…RLGH), 207–255 (KMYV…VIGN), and 257–305 (MYIF…DSQE). Fibronectin type-III domains are found at residues 357–436 (PPAP…ANCT), 516–606 (TPSN…TCIP), and 608–720 (FPGA…SKKA). A disordered region spans residues 398-472 (AASPDASAAP…VALHSPLAPN (75 aa)). Over residues 419–433 (QGSNSILHNSVSDPA) the composition is skewed to polar residues.

As to quaternary structure, binds KMT2A/MLL1. Component of the MLL1/MLL complex, at least composed of KMT2A/MLL1, ASH2L, RBBP5, DPY30, WDR5, MEN1, HCFC1 and HCFC2. Interacts with TASOR.

It localises to the cytoplasm. The protein resides in the nucleus. The protein is Host cell factor 2 (Hcfc2) of Rattus norvegicus (Rat).